Reading from the N-terminus, the 130-residue chain is D-ribose pyranase (130 aa).

The active-site Proton donor is the histidine 20. Substrate-binding positions include aspartate 28, histidine 97, and 119–121 (YSN).

This sequence belongs to the RbsD / FucU family. RbsD subfamily. As to quaternary structure, homodecamer.

The protein localises to the cytoplasm. It catalyses the reaction beta-D-ribopyranose = beta-D-ribofuranose. It functions in the pathway carbohydrate metabolism; D-ribose degradation; D-ribose 5-phosphate from beta-D-ribopyranose: step 1/2. Functionally, catalyzes the interconversion of beta-pyran and beta-furan forms of D-ribose. This Lacticaseibacillus casei (strain BL23) (Lactobacillus casei) protein is D-ribose pyranase.